The following is a 314-amino-acid chain: 4-hydroxy-3-methylbut-2-enyl diphosphate reductase (314 aa).

Position 12 (C12) interacts with [4Fe-4S] cluster. Residues H41 and H74 each coordinate (2E)-4-hydroxy-3-methylbut-2-enyl diphosphate. 2 residues coordinate dimethylallyl diphosphate: H41 and H74. 2 residues coordinate isopentenyl diphosphate: H41 and H74. C96 is a binding site for [4Fe-4S] cluster. (2E)-4-hydroxy-3-methylbut-2-enyl diphosphate is bound at residue H124. Residue H124 participates in dimethylallyl diphosphate binding. Position 124 (H124) interacts with isopentenyl diphosphate. E126 (proton donor) is an active-site residue. Residue T167 coordinates (2E)-4-hydroxy-3-methylbut-2-enyl diphosphate. C197 serves as a coordination point for [4Fe-4S] cluster. (2E)-4-hydroxy-3-methylbut-2-enyl diphosphate is bound by residues S225, S226, N227, and S269. Residues S225, S226, N227, and S269 each contribute to the dimethylallyl diphosphate site. Positions 225, 226, 227, and 269 each coordinate isopentenyl diphosphate.

Belongs to the IspH family. [4Fe-4S] cluster is required as a cofactor.

The enzyme catalyses isopentenyl diphosphate + 2 oxidized [2Fe-2S]-[ferredoxin] + H2O = (2E)-4-hydroxy-3-methylbut-2-enyl diphosphate + 2 reduced [2Fe-2S]-[ferredoxin] + 2 H(+). It catalyses the reaction dimethylallyl diphosphate + 2 oxidized [2Fe-2S]-[ferredoxin] + H2O = (2E)-4-hydroxy-3-methylbut-2-enyl diphosphate + 2 reduced [2Fe-2S]-[ferredoxin] + 2 H(+). Its pathway is isoprenoid biosynthesis; dimethylallyl diphosphate biosynthesis; dimethylallyl diphosphate from (2E)-4-hydroxy-3-methylbutenyl diphosphate: step 1/1. It functions in the pathway isoprenoid biosynthesis; isopentenyl diphosphate biosynthesis via DXP pathway; isopentenyl diphosphate from 1-deoxy-D-xylulose 5-phosphate: step 6/6. Catalyzes the conversion of 1-hydroxy-2-methyl-2-(E)-butenyl 4-diphosphate (HMBPP) into a mixture of isopentenyl diphosphate (IPP) and dimethylallyl diphosphate (DMAPP). Acts in the terminal step of the DOXP/MEP pathway for isoprenoid precursor biosynthesis. The protein is 4-hydroxy-3-methylbut-2-enyl diphosphate reductase of Actinobacillus pleuropneumoniae serotype 5b (strain L20).